The following is a 540-amino-acid chain: GMP synthase [glutamine-hydrolyzing] (540 aa).

In terms of domain architecture, Glutamine amidotransferase type-1 spans 26-216; it reads LIIILDFGSQ…VYHICDCEPT (191 aa). The Nucleophile role is filled by C103. Catalysis depends on residues H190 and E192. In terms of domain architecture, GMPS ATP-PPase spans 217–415; that stretch reads WTTAAFVEEA…IGLPEEIVQR (199 aa). 244 to 250 is a binding site for ATP; it reads SGGVDSS.

Homodimer.

The catalysed reaction is XMP + L-glutamine + ATP + H2O = GMP + L-glutamate + AMP + diphosphate + 2 H(+). Its pathway is purine metabolism; GMP biosynthesis; GMP from XMP (L-Gln route): step 1/1. Functionally, catalyzes the synthesis of GMP from XMP. The chain is GMP synthase [glutamine-hydrolyzing] from Nostoc punctiforme (strain ATCC 29133 / PCC 73102).